A 116-amino-acid chain; its full sequence is Iron-sulfur cluster insertion protein ErpA (116 aa).

The iron-sulfur cluster site is built by cysteine 44, cysteine 108, and cysteine 110.

Belongs to the HesB/IscA family. In terms of assembly, homodimer. It depends on iron-sulfur cluster as a cofactor.

Required for insertion of 4Fe-4S clusters for at least IspG. The polypeptide is Iron-sulfur cluster insertion protein ErpA (Francisella tularensis subsp. mediasiatica (strain FSC147)).